Consider the following 164-residue polypeptide: Protein-export protein SecB (164 aa).

This sequence belongs to the SecB family. In terms of assembly, homotetramer, a dimer of dimers. One homotetramer interacts with 1 SecA dimer.

The protein localises to the cytoplasm. In terms of biological role, one of the proteins required for the normal export of preproteins out of the cell cytoplasm. It is a molecular chaperone that binds to a subset of precursor proteins, maintaining them in a translocation-competent state. It also specifically binds to its receptor SecA. The sequence is that of Protein-export protein SecB from Pseudomonas syringae pv. tomato (strain ATCC BAA-871 / DC3000).